Here is a 1102-residue protein sequence, read N- to C-terminus: Probable ubiquitin-conjugating enzyme E2 23 (1102 aa).

Disordered regions lie at residues 1-20, 25-111, 396-418, 579-602, 661-710, and 760-800; these read MEHE…DSSV, ASLS…DGNY, LPKV…PVHE, SPGN…SHQE, DESV…DIYA, and QAES…KNIL. Over residues 31–44 the composition is skewed to basic and acidic residues; it reads DSEHPNIYRQDIVK. Residues 59–88 show a composition bias toward acidic residues; the sequence is GDSDSDSDISDEEEDDDDDEDNDDDDEDVE. Over residues 579–596 the composition is skewed to polar residues; it reads SPGNSFEEATQQDNGYQD. Positions 779–800 are enriched in polar residues; sequence SKVNVTDNCESKGTQANAKNIL. Residues 850–1010 enclose the UBC core domain; sequence QWFKKVDQDW…TFLLNCKTMM (161 aa). The active-site Glycyl thioester intermediate is C936.

This sequence belongs to the ubiquitin-conjugating enzyme family.

The enzyme catalyses S-ubiquitinyl-[E1 ubiquitin-activating enzyme]-L-cysteine + [E2 ubiquitin-conjugating enzyme]-L-cysteine = [E1 ubiquitin-activating enzyme]-L-cysteine + S-ubiquitinyl-[E2 ubiquitin-conjugating enzyme]-L-cysteine.. It participates in protein modification; protein ubiquitination. Its function is as follows. Accepts the ubiquitin from the E1 complex and catalyzes its covalent attachment to other proteins. The chain is Probable ubiquitin-conjugating enzyme E2 23 (UBC23) from Arabidopsis thaliana (Mouse-ear cress).